A 483-amino-acid chain; its full sequence is Ribulose bisphosphate carboxylase large chain (483 aa).

The propeptide occupies 1–2; that stretch reads MS. Substrate is bound by residues Asn-123 and Thr-173. The active-site Proton acceptor is the Lys-175. Lys-177 provides a ligand contact to substrate. Residues Lys-201, Asp-203, and Glu-204 each coordinate Mg(2+). Lys-201 is subject to N6-carboxylysine. Phosphoserine is present on Ser-208. His-294 functions as the Proton acceptor in the catalytic mechanism. Substrate is bound by residues Arg-295 and His-327. At Thr-330 the chain carries Phosphothreonine. Position 379 (Ser-379) interacts with substrate.

It belongs to the RuBisCO large chain family. Type I subfamily. In terms of assembly, heterohexadecamer of 8 large chains and 8 small chains; disulfide-linked. The disulfide link is formed within the large subunit homodimers. Requires Mg(2+) as cofactor. Post-translationally, the disulfide bond which can form in the large chain dimeric partners within the hexadecamer appears to be associated with oxidative stress and protein turnover.

It is found in the plastid. The protein resides in the chloroplast. It catalyses the reaction 2 (2R)-3-phosphoglycerate + 2 H(+) = D-ribulose 1,5-bisphosphate + CO2 + H2O. The enzyme catalyses D-ribulose 1,5-bisphosphate + O2 = 2-phosphoglycolate + (2R)-3-phosphoglycerate + 2 H(+). Functionally, ruBisCO catalyzes two reactions: the carboxylation of D-ribulose 1,5-bisphosphate, the primary event in carbon dioxide fixation, as well as the oxidative fragmentation of the pentose substrate in the photorespiration process. Both reactions occur simultaneously and in competition at the same active site. This is Ribulose bisphosphate carboxylase large chain from Aethionema cordifolium (Lebanon stonecress).